Reading from the N-terminus, the 288-residue chain is Release factor glutamine methyltransferase (288 aa).

S-adenosyl-L-methionine-binding residues include aspartate 142 and asparagine 186. 186–189 (NPPY) provides a ligand contact to substrate.

The protein belongs to the protein N5-glutamine methyltransferase family. PrmC subfamily.

The enzyme catalyses L-glutaminyl-[peptide chain release factor] + S-adenosyl-L-methionine = N(5)-methyl-L-glutaminyl-[peptide chain release factor] + S-adenosyl-L-homocysteine + H(+). Functionally, methylates the class 1 translation termination release factors RF1/PrfA and RF2/PrfB on the glutamine residue of the universally conserved GGQ motif. The polypeptide is Release factor glutamine methyltransferase (Mycobacterium leprae (strain TN)).